The following is a 25-amino-acid chain: Cysteine protease inhibitor 2 (25 aa).

It belongs to the protease inhibitor I3 (leguminous Kunitz-type inhibitor) family. Cortex of tuber.

In terms of biological role, inhibitor of subtilisin. Inhibits moderately trypsin and chymotrypsin (serine proteases). May protect the plant by inhibiting proteases of invading organisms. This Solanum tuberosum (Potato) protein is Cysteine protease inhibitor 2.